The following is a 458-amino-acid chain: Sulfite efflux pump SSU1 (458 aa).

The Cytoplasmic segment spans residues 1-11 (MVANWVLALTR). A helical membrane pass occupies residues 12 to 32 (QFDPFMFMMVMGVGISSNILY). The Extracellular portion of the chain corresponds to 33 to 48 (SFPYPARWLRICSYIM). The chain crosses the membrane as a helical span at residues 49–69 (FAIACLIFIAVQALQILHLIV). Residues 70 to 89 (YIKEKSFREYFNDFFRNMKH) lie on the Cytoplasmic side of the membrane. A helical membrane pass occupies residues 90-110 (NLFWGTYPMGLVTIINFLGAL). Residues 111-135 (SKANTTKSPTNARNLMIFVYVLWWY) lie on the Extracellular side of the membrane. A helical membrane pass occupies residues 136–156 (DLAVCLVIAWGISFLIWHDYY). Topologically, residues 157–176 (PLEGIGNYPSYNIKMASENM) are cytoplasmic. A helical membrane pass occupies residues 177–197 (KSVLLLDIIPLVVVASSCGTF). The Extracellular portion of the chain corresponds to 198 to 220 (TMSEIFFHAFNRNIQLITLVICA). The helical transmembrane segment at 221-241 (LTWLHAIIFVFILIAIYFWSL) threads the bilayer. The Cytoplasmic segment spans residues 242-252 (YINKIPPMTQV). The chain crosses the membrane as a helical span at residues 253 to 275 (FTLFLLLGPMGQGSFGVLLLTDN). Residues 276-309 (IKKYAGKYYPTDNITREQEILTIAVPWCFKILGM) lie on the Extracellular side of the membrane. Residues 310 to 330 (VSAMALLAMGYFFTVISVVSI) form a helical membrane-spanning segment. Residues 331–350 (LSYYNKKEIENETGKVKRVY) are Cytoplasmic-facing. The chain crosses the membrane as a helical span at residues 351–371 (TFHKGFWGMTFPMGTMSLGNE). Residues 372–387 (ELYVQYNQYVPLYAFR) are Extracellular-facing. The chain crosses the membrane as a helical span at residues 388-408 (VLGTIYGGVCVCWSILCLLCT). The Cytoplasmic portion of the chain corresponds to 409-458 (LHEYSKKMLHAARKSSLFSESGTEKTTVSPYNSIESVEESNSALDFTRLA). Residues Ser444, Ser448, and Ser450 each carry the phosphoserine modification.

This sequence belongs to the tellurite-resistance/dicarboxylate transporter (TDT) family.

It localises to the cell membrane. Involved in efflux of free sulfite. Mutations in the SSU1 gene cause sensitivity to sulfite. The polypeptide is Sulfite efflux pump SSU1 (SSU1) (Saccharomyces cerevisiae (strain ATCC 204508 / S288c) (Baker's yeast)).